Here is a 167-residue protein sequence, read N- to C-terminus: ATP synthase subunit b (167 aa).

A helical transmembrane segment spans residues S7–A25.

It belongs to the ATPase B chain family. In terms of assembly, F-type ATPases have 2 components, F(1) - the catalytic core - and F(0) - the membrane proton channel. F(1) has five subunits: alpha(3), beta(3), gamma(1), delta(1), epsilon(1). F(0) has three main subunits: a(1), b(2) and c(10-14). The alpha and beta chains form an alternating ring which encloses part of the gamma chain. F(1) is attached to F(0) by a central stalk formed by the gamma and epsilon chains, while a peripheral stalk is formed by the delta and b chains.

It is found in the cell inner membrane. In terms of biological role, f(1)F(0) ATP synthase produces ATP from ADP in the presence of a proton or sodium gradient. F-type ATPases consist of two structural domains, F(1) containing the extramembraneous catalytic core and F(0) containing the membrane proton channel, linked together by a central stalk and a peripheral stalk. During catalysis, ATP synthesis in the catalytic domain of F(1) is coupled via a rotary mechanism of the central stalk subunits to proton translocation. Its function is as follows. Component of the F(0) channel, it forms part of the peripheral stalk, linking F(1) to F(0). The sequence is that of ATP synthase subunit b from Rickettsia typhi (strain ATCC VR-144 / Wilmington).